A 128-amino-acid chain; its full sequence is Diacylglycerol kinase (128 aa).

Glutamate 34 contacts a divalent metal cation. A run of 2 helical transmembrane segments spans residues 35 to 55 (SAFRQIVILALFCIVLASYLA) and 58 to 78 (FLEWGLLILPCFLSVVVELIN). Glutamate 75 functions as the Proton acceptor in the catalytic mechanism. A divalent metal cation is bound at residue glutamate 82. A helical membrane pass occupies residues 107-127 (QLIGLIFWTLIWGRYLLALYL).

Belongs to the bacterial diacylglycerol kinase family. It depends on Mg(2+) as a cofactor.

The protein resides in the cell inner membrane. It catalyses the reaction a 1,2-diacyl-sn-glycerol + ATP = a 1,2-diacyl-sn-glycero-3-phosphate + ADP + H(+). Catalyzes the ATP-dependent phosphorylation of sn-l,2-diacylglycerol (DAG) to phosphatidic acid. Involved in the recycling of diacylglycerol produced as a by-product during membrane-derived oligosaccharide (MDO) biosynthesis. In Helicobacter pylori (strain ATCC 700392 / 26695) (Campylobacter pylori), this protein is Diacylglycerol kinase (dgkA).